Here is a 255-residue protein sequence, read N- to C-terminus: Small ribosomal subunit protein uS2 (255 aa).

Belongs to the universal ribosomal protein uS2 family.

The chain is Small ribosomal subunit protein uS2 from Streptococcus pyogenes serotype M49 (strain NZ131).